The primary structure comprises 300 residues: Ribosomal RNA small subunit methyltransferase H (300 aa).

S-adenosyl-L-methionine contacts are provided by residues 46-48, D65, F92, D107, and Q114; that span reads GGH.

It belongs to the methyltransferase superfamily. RsmH family.

It is found in the cytoplasm. It catalyses the reaction cytidine(1402) in 16S rRNA + S-adenosyl-L-methionine = N(4)-methylcytidine(1402) in 16S rRNA + S-adenosyl-L-homocysteine + H(+). In terms of biological role, specifically methylates the N4 position of cytidine in position 1402 (C1402) of 16S rRNA. The protein is Ribosomal RNA small subunit methyltransferase H of Prochlorococcus marinus (strain MIT 9515).